A 473-amino-acid chain; its full sequence is Maltose fermentation regulatory protein MAL13 (473 aa).

The segment at residues 13-39 (CDCCRIRRVKCDGKRPCSSCLQNSLDC) is a DNA-binding region (zn(2)-C6 fungal-type). A Nuclear localization signal motif is present at residues 46–54 (RKRGPKSIR).

It belongs to the MAL13 family.

The protein localises to the nucleus. Its function is as follows. Regulates the coordinate transcription of structural MAL1S (maltase) and AGT1 (maltose permease) genes. This Saccharomyces cerevisiae (strain ATCC 204508 / S288c) (Baker's yeast) protein is Maltose fermentation regulatory protein MAL13 (MAL13).